The primary structure comprises 178 residues: Zinc finger CCHC domain-containing protein 10 (178 aa).

The CCHC-type zinc-finger motif lies at Val-21–Gly-38. A disordered region spans residues Gln-66–Lys-178. Composition is skewed to low complexity over residues Ser-85–Ser-113 and Ser-121–Ser-164.

The protein is Zinc finger CCHC domain-containing protein 10 (Zcchc10) of Mus musculus (Mouse).